Here is a 217-residue protein sequence, read N- to C-terminus: Ras-related protein Rab-19 (217 aa).

The GTP site is built by serine 26, valine 28, glycine 29, lysine 30, threonine 31, cysteine 32, tyrosine 42, serine 43, glutamate 44, serine 45, and threonine 49. Threonine 31 lines the Mg(2+) pocket. The Switch 1 motif lies at 39–54; sequence SGVYSESQQNTIGVDF. The Mg(2+) site is built by threonine 49 and aspartate 72. The short motif at 74–89 is the Switch 2 element; the sequence is AGQERFRTITQSYYRS. 7 residues coordinate GTP: glycine 75, asparagine 130, lysine 131, aspartate 133, serine 161, alanine 162, and lysine 163. 2 S-geranylgeranyl cysteine lipidation sites follow: cysteine 215 and cysteine 217. At cysteine 217 the chain carries Cysteine methyl ester.

It belongs to the small GTPase superfamily. Rab family. Mg(2+) serves as cofactor.

Its subcellular location is the cell membrane. It carries out the reaction GTP + H2O = GDP + phosphate + H(+). Its activity is regulated as follows. Regulated by guanine nucleotide exchange factors (GEFs) which promote the exchange of bound GDP for free GTP. Regulated by GTPase activating proteins (GAPs) which increase the GTP hydrolysis activity. Inhibited by GDP dissociation inhibitors (GDIs). Its function is as follows. The small GTPases Rab are key regulators of intracellular membrane trafficking, from the formation of transport vesicles to their fusion with membranes. Rabs cycle between an inactive GDP-bound form and an active GTP-bound form that is able to recruit to membranes different set of downstream effectors directly responsible for vesicle formation, movement, tethering and fusion. The protein is Ras-related protein Rab-19 of Rattus norvegicus (Rat).